A 514-amino-acid chain; its full sequence is Endogenous retrovirus group PABLB member 1 Env polyprotein (514 aa).

N-linked (GlcNAc...) asparagine glycosylation is present at Asn58. The segment at 60 to 316 is surface protein; the sequence is STSNVFLQWA…YPYLPHVVNQ (257 aa). The CXXC motif lies at 82–85; it reads CWVC. N-linked (GlcNAc...) asparagine glycosylation is found at Asn133, Asn140, Asn155, Asn218, Asn226, and Asn267. The interval 317-514 is transmembrane protein; the sequence is GTRAIVHRND…QRDIFHSNAP (198 aa). The fusion peptide stretch occupies residues 328 to 348; the sequence is LPTIFMPSVGLGTVIQHIEAL. Asn350 and Asn357 each carry an N-linked (GlcNAc...) asparagine glycan. A CKS-17 motif is present at residues 378 to 394; sequence LQNRMALDILTAAEGGT. Cys395 and Cys402 are oxidised to a cystine. The CX6CC motif lies at 395-403; that stretch reads CALIKTECC. 2 N-linked (GlcNAc...) asparagine glycosylation sites follow: Asn408 and Asn412. The helical transmembrane segment at 452 to 472 threads the bilayer; it reads ILIVLATLWSVGIALCCGLYF.

Belongs to the gamma type-C retroviral envelope protein family. HERV class-I R(b) env subfamily. In terms of processing, the CXXC motif is highly conserved across a broad range of retroviral envelope proteins. It is thought to participate in the formation of a labile disulfide bond possibly with the CX6CC motif present in the transmembrane domain. In terms of tissue distribution, low expression in placenta and testis.

It is found in the cell membrane. In terms of biological role, retroviral envelope proteins mediate receptor recognition and membrane fusion during early infection. Endogenous envelope proteins may have kept, lost or modified their original function during evolution. This endogenous envelope protein has lost its original fusogenic properties. The protein is Endogenous retrovirus group PABLB member 1 Env polyprotein (ERVPABLB-1) of Homo sapiens (Human).